The primary structure comprises 911 residues: Isoleucine--tRNA ligase (911 aa).

Positions 57 to 67 (PYANGDIHMGH) match the 'HIGH' region motif. An L-isoleucyl-5'-AMP-binding site is contributed by Glu-551. A 'KMSKS' region motif is present at residues 592-596 (KMSKS). Lys-595 contributes to the ATP binding site. Zn(2+) is bound by residues Cys-881, Cys-884, Cys-901, and Cys-904.

Belongs to the class-I aminoacyl-tRNA synthetase family. IleS type 1 subfamily. In terms of assembly, monomer. It depends on Zn(2+) as a cofactor.

It localises to the cytoplasm. The catalysed reaction is tRNA(Ile) + L-isoleucine + ATP = L-isoleucyl-tRNA(Ile) + AMP + diphosphate. Its function is as follows. Catalyzes the attachment of isoleucine to tRNA(Ile). As IleRS can inadvertently accommodate and process structurally similar amino acids such as valine, to avoid such errors it has two additional distinct tRNA(Ile)-dependent editing activities. One activity is designated as 'pretransfer' editing and involves the hydrolysis of activated Val-AMP. The other activity is designated 'posttransfer' editing and involves deacylation of mischarged Val-tRNA(Ile). This is Isoleucine--tRNA ligase from Exiguobacterium sibiricum (strain DSM 17290 / CCUG 55495 / CIP 109462 / JCM 13490 / 255-15).